A 273-amino-acid chain; its full sequence is Orotidine 5'-phosphate decarboxylase (273 aa).

Lysine 95 acts as the Proton donor in catalysis.

Belongs to the OMP decarboxylase family. Type 2 subfamily.

The catalysed reaction is orotidine 5'-phosphate + H(+) = UMP + CO2. The protein operates within pyrimidine metabolism; UMP biosynthesis via de novo pathway; UMP from orotate: step 2/2. This chain is Orotidine 5'-phosphate decarboxylase, found in Bordetella bronchiseptica (strain ATCC BAA-588 / NCTC 13252 / RB50) (Alcaligenes bronchisepticus).